Reading from the N-terminus, the 152-residue chain is Aspartate carbamoyltransferase regulatory chain (152 aa).

Positions 109, 114, 138, and 141 each coordinate Zn(2+).

This sequence belongs to the PyrI family. Contains catalytic and regulatory chains. The cofactor is Zn(2+).

Functionally, involved in allosteric regulation of aspartate carbamoyltransferase. In Thermoplasma volcanium (strain ATCC 51530 / DSM 4299 / JCM 9571 / NBRC 15438 / GSS1), this protein is Aspartate carbamoyltransferase regulatory chain.